Consider the following 37-residue polypeptide: Large ribosomal subunit protein bL36A (37 aa).

The protein belongs to the bacterial ribosomal protein bL36 family.

In Leifsonia xyli subsp. xyli (strain CTCB07), this protein is Large ribosomal subunit protein bL36A.